A 131-amino-acid polypeptide reads, in one-letter code: Interleukin-13 (131 aa).

Residues 1–18 (MALWLTLVIALTCFGGLA) form the signal peptide. N-linked (GlcNAc...) asparagine glycosylation is found at Asn-39, Asn-50, Asn-58, and Asn-74. Disulfide bonds link Cys-49–Cys-78 and Cys-66–Cys-92.

The protein belongs to the IL-4/IL-13 family. As to quaternary structure, interacts with IL13RA2.

The protein localises to the secreted. Functionally, cytokine that plays important roles in allergic inflammation and immune response to parasite infection. Synergizes with IL2 in regulating interferon-gamma synthesis. Stimulates B-cell proliferation, and activation of eosinophils, basophils, and mast cells. Plays an important role in controlling IL33 activity by modulating the production of transmembrane and soluble forms of interleukin-1 receptor-like 1/IL1RL1. Displays the capacity to antagonize Th1-driven proinflammatory immune response and downregulates synthesis of many proinflammatory cytokines including IL1, IL6, IL10, IL12 and TNF-alpha through a mechanism that partially involves suppression of NF-kappa-B. Also functions on nonhematopoietic cells, including endothelial cells where it induces vascular cell adhesion protein 1/VCAM1, which is important in the recruitment of eosinophils. Exerts its biological effects through its receptors which comprises the IL4R chain and the IL13RA1 chain, to activate JAK1 and TYK2, leading to the activation of STAT6. Aside from IL13RA1, another receptor IL13RA2 acts as a high affinity decoy for IL13 and mediates internalization and depletion of extracellular IL13. The chain is Interleukin-13 (IL13) from Sus scrofa (Pig).